The following is a 447-amino-acid chain: Probable butyrate:acetyl-CoA coenzyme A-transferase (447 aa).

220–224 is a CoA binding site; sequence GIGGT. Glu245 serves as the catalytic 5-glutamyl coenzyme A thioester intermediate. CoA contacts are provided by Ile320 and Gly343.

This sequence belongs to the acetyl-CoA hydrolase/transferase family.

It localises to the cytoplasm. The catalysed reaction is butanoate + acetyl-CoA = butanoyl-CoA + acetate. Its pathway is lipid metabolism; butanoate metabolism. Its function is as follows. Coenzyme A-transferase that converts butyrate to butyryl-CoA. Involved in the syntrophic growth of S.wolfei on butyrate in cooperation with methanogens or an appropriate hydrogen-scavenging bacterium, as part of the butyrate oxidation pathway. This chain is Probable butyrate:acetyl-CoA coenzyme A-transferase, found in Syntrophomonas wolfei subsp. wolfei (strain DSM 2245B / Goettingen).